A 134-amino-acid polypeptide reads, in one-letter code: uncharacterized protein (134 aa).

The next 2 helical transmembrane spans lie at 49-69 (VAVPAVLVLAPFWLIPTSLDV) and 71-91 (LSMTLPILIPFVYFSHALNKV).

It is found in the cell membrane. This is an uncharacterized protein from Mycobacterium tuberculosis (strain ATCC 25618 / H37Rv).